The sequence spans 527 residues: Bifunctional purine biosynthesis protein PurH (527 aa).

In terms of domain architecture, MGS-like spans Met-1–Ala-149.

Belongs to the PurH family.

It carries out the reaction (6R)-10-formyltetrahydrofolate + 5-amino-1-(5-phospho-beta-D-ribosyl)imidazole-4-carboxamide = 5-formamido-1-(5-phospho-D-ribosyl)imidazole-4-carboxamide + (6S)-5,6,7,8-tetrahydrofolate. It catalyses the reaction IMP + H2O = 5-formamido-1-(5-phospho-D-ribosyl)imidazole-4-carboxamide. It participates in purine metabolism; IMP biosynthesis via de novo pathway; 5-formamido-1-(5-phospho-D-ribosyl)imidazole-4-carboxamide from 5-amino-1-(5-phospho-D-ribosyl)imidazole-4-carboxamide (10-formyl THF route): step 1/1. The protein operates within purine metabolism; IMP biosynthesis via de novo pathway; IMP from 5-formamido-1-(5-phospho-D-ribosyl)imidazole-4-carboxamide: step 1/1. This chain is Bifunctional purine biosynthesis protein PurH, found in Xanthomonas axonopodis pv. citri (strain 306).